The chain runs to 295 residues: Putative aquaporin-12B (295 aa).

Residues 1-22 (MAGLNVSLSFFFATFTLCEAAR) are Cytoplasmic-facing. The chain crosses the membrane as a helical span at residues 23–41 (RASKALLPVGAYEVFAREA). The Extracellular portion of the chain corresponds to 42–55 (MRTLVELGPWAGDF). The helical transmembrane segment at 56-74 (GPDLLLTLLFLLFLAHGVT) threads the bilayer. Over 75–76 (LD) the chain is Cytoplasmic. An intramembrane region (discontinuously helical) is located at residues 77–114 (GASANPTVSLQEFLMAEESLPGTLLKLAAQGLGMQAAC). The NPA 1 motif lies at 81–83 (NPT). The Cytoplasmic portion of the chain corresponds to 115-120 (TLTRLC). Residues 121–142 (WAWELSDLHLLQSLMAQSCSSA) form a helical membrane-spanning segment. At 143-145 (LRT) the chain is on the extracellular side. The helical transmembrane segment at 146 to 166 (SVPHGALVEAACAFCFHLTLL) threads the bilayer. Residues 167-174 (HLRHSPPA) lie on the Cytoplasmic side of the membrane. Residues 175–191 (YSGPAVALLVTVTAYTA) traverse the membrane as a helical segment. Residues 192-194 (GPF) are Extracellular-facing. The discontinuously helical intramembrane region spans 195–206 (TSAFFNPALAAS). The NPA 2 motif lies at 200-202 (NPA). The Extracellular segment spans residues 207–223 (VTFACSGHTLLEYVQVY). A helical membrane pass occupies residues 224 to 244 (WLGPLTGMVLAVLLHQGRLPH). Topologically, residues 245-295 (LFQRNLFYGQKNKYRAPRGKPAPASGDTQTPAKGSSVREPGRSGVEGPHSS) are cytoplasmic. The tract at residues 257 to 295 (KYRAPRGKPAPASGDTQTPAKGSSVREPGRSGVEGPHSS) is disordered.

This sequence belongs to the MIP/aquaporin (TC 1.A.8) family. AQP11/AQP12 subfamily. In terms of assembly, homotetramer; each monomer provides an independent water pore.

The protein resides in the membrane. It catalyses the reaction H2O(in) = H2O(out). In terms of biological role, putative aquaporin. Could form homotetrameric transmembrane channels, with each monomer independently mediating water transport across the plasma membrane along its osmotic gradient. The chain is Putative aquaporin-12B from Homo sapiens (Human).